A 198-amino-acid polypeptide reads, in one-letter code: Nucleoid occlusion factor SlmA (198 aa).

The region spanning 10–70 (NRREEILQSL…SLIEFIEDSL (61 aa)) is the HTH tetR-type domain. Residues 33 to 52 (TTAKLAASVGVSEAALYRHF) constitute a DNA-binding region (H-T-H motif). A coiled-coil region spans residues 117 to 144 (EQDRLQGRINQLFERIEAQLRQVLREKR).

It belongs to the nucleoid occlusion factor SlmA family. Homodimer. Interacts with FtsZ.

The protein localises to the cytoplasm. It localises to the nucleoid. Its function is as follows. Required for nucleoid occlusion (NO) phenomenon, which prevents Z-ring formation and cell division over the nucleoid. Acts as a DNA-associated cell division inhibitor that binds simultaneously chromosomal DNA and FtsZ, and disrupts the assembly of FtsZ polymers. SlmA-DNA-binding sequences (SBS) are dispersed on non-Ter regions of the chromosome, preventing FtsZ polymerization at these regions. In Escherichia coli O127:H6 (strain E2348/69 / EPEC), this protein is Nucleoid occlusion factor SlmA.